The sequence spans 376 residues: Protein-glutamate methylesterase/protein-glutamine glutaminase 1 (376 aa).

Residues 4 to 121 (KVLVVDDSSF…ARNRDEAVSL (118 aa)) enclose the Response regulatory domain. The residue at position 55 (aspartate 55) is a 4-aspartylphosphate. Positions 138-174 (RPVASSTPVQERPQSTLNRPTTGLRREAPAQAPVSRA) are disordered. Over residues 141–158 (ASSTPVQERPQSTLNRPT) the composition is skewed to polar residues. Residues 183 to 376 (SGKKYQLTAI…ERMLVEVGLA (194 aa)) form the CheB-type methylesterase domain. Catalysis depends on residues serine 195, histidine 222, and aspartate 318.

Belongs to the CheB family. Post-translationally, phosphorylated by CheA. Phosphorylation of the N-terminal regulatory domain activates the methylesterase activity.

The protein localises to the cytoplasm. The enzyme catalyses [protein]-L-glutamate 5-O-methyl ester + H2O = L-glutamyl-[protein] + methanol + H(+). It carries out the reaction L-glutaminyl-[protein] + H2O = L-glutamyl-[protein] + NH4(+). Functionally, involved in chemotaxis. Part of a chemotaxis signal transduction system that modulates chemotaxis in response to various stimuli. Catalyzes the demethylation of specific methylglutamate residues introduced into the chemoreceptors (methyl-accepting chemotaxis proteins or MCP) by CheR. Also mediates the irreversible deamidation of specific glutamine residues to glutamic acid. The sequence is that of Protein-glutamate methylesterase/protein-glutamine glutaminase 1 from Vibrio vulnificus (strain CMCP6).